The sequence spans 573 residues: Leucine aminopeptidase, chloroplastic (573 aa).

The transit peptide at 1–53 (MATLRVSSLLASSPSSLHCNPSVFTKCQSSPRWAFSFSVTPLCSRRSKRIVHC) directs the protein to the chloroplast. Mn(2+)-binding residues include Lys-342 and Asp-347. Lys-354 is a catalytic residue. Mn(2+) is bound by residues Asp-367, Asp-427, and Glu-429. Arg-431 is a catalytic residue.

This sequence belongs to the peptidase M17 family. As to quaternary structure, homohexamer (dimer of homotrimers). Mn(2+) serves as cofactor. As to expression, in tubers and floral buds of untreated plants. After abscisic acid (ABA) treatment or mechanical wounding is mostly accumulated in leaves, to a lesser extent in stems, but not in roots.

Its subcellular location is the plastid. It is found in the chloroplast. It carries out the reaction Release of an N-terminal amino acid, Xaa-|-Yaa-, in which Xaa is preferably Leu, but may be other amino acids including Pro although not Arg or Lys, and Yaa may be Pro. Amino acid amides and methyl esters are also readily hydrolyzed, but rates on arylamides are exceedingly low.. The catalysed reaction is Release of N-terminal proline from a peptide.. Functionally, presumably involved in the processing and regular turnover of intracellular proteins. The sequence is that of Leucine aminopeptidase, chloroplastic (LAP) from Solanum tuberosum (Potato).